Consider the following 872-residue polypeptide: Leucine--tRNA ligase (872 aa).

The 'HIGH' region signature appears at 42–52 (PYPSGSLHMGH). The short motif at 634-638 (TMSKS) is the 'KMSKS' region element. Lys-637 lines the ATP pocket.

Belongs to the class-I aminoacyl-tRNA synthetase family.

The protein localises to the cytoplasm. The catalysed reaction is tRNA(Leu) + L-leucine + ATP = L-leucyl-tRNA(Leu) + AMP + diphosphate. In Trichormus variabilis (strain ATCC 29413 / PCC 7937) (Anabaena variabilis), this protein is Leucine--tRNA ligase.